The following is a 1291-amino-acid chain: Period circadian protein homolog 1 (1291 aa).

Residues 1–134 (MSGPLEGADG…SSEQSARART (134 aa)) are disordered. The interaction with BTRC stretch occupies residues 1–151 (MSGPLEGADG…LRELKLRLPP (151 aa)). The span at 48–115 (NSNGSSGNES…AYSLLSASSE (68 aa)) shows a compositional bias: low complexity. Residues 116-132 (QDNPSTSGCSSEQSARA) are compositionally biased toward polar residues. Thr-121 carries the phosphothreonine; by CSNK1E modification. Phosphoserine; by CSNK1E occurs at positions 122 and 126. Positions 138–147 (LMTALRELKL) match the Nuclear export signal 1 motif. 2 PAS domains span residues 208 to 275 (ITSE…PSRL) and 348 to 414 (YEAP…KILQ). The region spanning 422–465 (HSPIRFCARNGEYVTMDTSWAGFVHPWSRKVAFVLGRHKVRTAP) is the PAC domain. Positions 489–498 (LSEQIHRLLL) match the Nuclear export signal 2 motif. 2 disordered regions span residues 508–544 (GLCG…PAPV) and 647–698 (TKRK…KEPV). Low complexity-rich tracts occupy residues 513–533 (GPLM…SNGG) and 652–662 (ASSSSYTASSA). Residues 596–815 (ELEVAPVPDQ…GLDTSSVAPS (220 aa)) are required for phosphorylation by CSNK1E. Residues Ser-661, Ser-663, and Ser-704 each carry the phosphoserine modification. Disordered stretches follow at residues 749–772 (GLAP…TPDA), 809–873 (TSSV…PPAT), and 938–1037 (SQAP…ALSG). Residues 751–769 (APGPAPSPAPSPTVAPDPT) are compositionally biased toward pro residues. Phosphoserine is present on Ser-815. Residues 824 to 840 (IPPGRRHHCRSKAKRSR) carry the Nuclear localization signal motif. Over residues 827 to 846 (GRRHHCRSKAKRSRHHHHQT) the composition is skewed to basic residues. Pro residues-rich tracts occupy residues 859–873 (SPVP…PPAT) and 955–965 (PSLPPPPLSPP). The span at 973-985 (FNSRCSSPLQLNL) shows a compositional bias: polar residues. 2 positions are modified to phosphoserine: Ser-978 and Ser-979. Residues 981 to 988 (LQLNLLQL) carry the Nuclear export signal 3 motif. The LXXLL signature appears at 1042–1046 (LELLL). Residues 1051–1061 (RSGTGSAASGS) show a composition bias toward low complexity. Disordered regions lie at residues 1051-1099 (RSGT…YFGS) and 1207-1291 (SVQD…NSTS). Positions 1062–1076 (LGSGLGSGSGSGSHE) are enriched in gly residues. Positions 1077–1094 (GGSTSASITRSSQSSHTS) are enriched in low complexity. The interval 1148-1291 (SRDAASVLKQ…ALPAEENSTS (144 aa)) is CRY binding domain. Residues 1235 to 1248 (GEGGGCGVGGGGGD) are compositionally biased toward gly residues. The segment covering 1253–1267 (AQTQIGAKGSSSQDS) has biased composition (polar residues).

As to quaternary structure, homodimer. Component of the circadian core oscillator, which includes the CRY proteins, CLOCK or NPAS2, BMAL1 or BMAL2, CSNK1D and/or CSNK1E, TIMELESS, and the PER proteins. Interacts directly with TIMELESS. Interacts directly with PER2, PER3, CRY1 and CRY2. Interacts with BMAL1 and CLOCK. Interacts with GPRASP1. Interacts (phosphorylated) with BTRC and FBXW11; the interactions trigger proteasomal degradation. Interacts with NONO and SFPQ. Interacts with WDR5. Interacts with U2AF1L4 (Isoform 3). Interacts with USP2. Interacts with HNF4A. Phosphorylated on serine residues by CSNK1D, CSNK1E and probably also by CSNK1G2. Phosphorylation by CSNK1D or CSNK1E promotes nuclear location of PER proteins as well as ubiquitination and subsequent degradation. May be dephosphorylated by PP1. In terms of processing, ubiquitinated; requires phosphorylation by CSNK1E and interaction with BTRC and FBXW11. Deubiquitinated by USP2. In terms of tissue distribution, in brain, highest expression is observed in the SCN. Highly expressed in the pyramidal cell layer of the piriform cortex, the periventricular part of the caudate-putamen, many thalamic nuclei, and the granular layer of the cerebellar cortex. Weaker expression is detected in most area of the brain, including cortical and non cortical structures. Expression but no oscillations occurs in the glomerular and mitral cell layers of the olfactory bulb, the internal granular layer of the cerebellum, the cornu ammonis and dentate gyrus of the hippocampus, the cerebral and piriform cortices. Expressed in the renal cortex (at protein level). Also found in heart, brain, bladder, lumbar spinal cord, spleen, lung, liver, skeletal muscle and testis.

The protein localises to the nucleus. Its subcellular location is the cytoplasm. Transcriptional repressor which forms a core component of the circadian clock. The circadian clock, an internal time-keeping system, regulates various physiological processes through the generation of approximately 24 hour circadian rhythms in gene expression, which are translated into rhythms in metabolism and behavior. It is derived from the Latin roots 'circa' (about) and 'diem' (day) and acts as an important regulator of a wide array of physiological functions including metabolism, sleep, body temperature, blood pressure, endocrine, immune, cardiovascular, and renal function. Consists of two major components: the central clock, residing in the suprachiasmatic nucleus (SCN) of the brain, and the peripheral clocks that are present in nearly every tissue and organ system. Both the central and peripheral clocks can be reset by environmental cues, also known as Zeitgebers (German for 'timegivers'). The predominant Zeitgeber for the central clock is light, which is sensed by retina and signals directly to the SCN. The central clock entrains the peripheral clocks through neuronal and hormonal signals, body temperature and feeding-related cues, aligning all clocks with the external light/dark cycle. Circadian rhythms allow an organism to achieve temporal homeostasis with its environment at the molecular level by regulating gene expression to create a peak of protein expression once every 24 hours to control when a particular physiological process is most active with respect to the solar day. Transcription and translation of core clock components (CLOCK, NPAS2, BMAL1, BMAL2, PER1, PER2, PER3, CRY1 and CRY2) plays a critical role in rhythm generation, whereas delays imposed by post-translational modifications (PTMs) are important for determining the period (tau) of the rhythms (tau refers to the period of a rhythm and is the length, in time, of one complete cycle). A diurnal rhythm is synchronized with the day/night cycle, while the ultradian and infradian rhythms have a period shorter and longer than 24 hours, respectively. Disruptions in the circadian rhythms contribute to the pathology of cardiovascular diseases, cancer, metabolic syndromes and aging. A transcription/translation feedback loop (TTFL) forms the core of the molecular circadian clock mechanism. Transcription factors, CLOCK or NPAS2 and BMAL1 or BMAL2, form the positive limb of the feedback loop, act in the form of a heterodimer and activate the transcription of core clock genes and clock-controlled genes (involved in key metabolic processes), harboring E-box elements (5'-CACGTG-3') within their promoters. The core clock genes: PER1/2/3 and CRY1/2 which are transcriptional repressors form the negative limb of the feedback loop and interact with the CLOCK|NPAS2-BMAL1|BMAL2 heterodimer inhibiting its activity and thereby negatively regulating their own expression. This heterodimer also activates nuclear receptors NR1D1/2 and RORA/B/G, which form a second feedback loop and which activate and repress BMAL1 transcription, respectively. Regulates circadian target genes expression at post-transcriptional levels, but may not be required for the repression at transcriptional level. Controls PER2 protein decay. Represses CRY2 preventing its repression on CLOCK/BMAL1 target genes such as FXYD5 and SCNN1A in kidney and PPARA in liver. Besides its involvement in the maintenance of the circadian clock, has an important function in the regulation of several processes. Participates in the repression of glucocorticoid receptor NR3C1/GR-induced transcriptional activity by reducing the association of NR3C1/GR to glucocorticoid response elements (GREs) by BMAL1:CLOCK. Plays a role in the modulation of the neuroinflammatory state via the regulation of inflammatory mediators release, such as CCL2 and IL6. In spinal astrocytes, negatively regulates the MAPK14/p38 and MAPK8/JNK MAPK cascades as well as the subsequent activation of NFkappaB. Coordinately regulates the expression of multiple genes that are involved in the regulation of renal sodium reabsorption. Can act as gene expression activator in a gene and tissue specific manner, in kidney enhances WNK1 and SLC12A3 expression in collaboration with CLOCK. Modulates hair follicle cycling. Represses the CLOCK-BMAL1 induced transcription of BHLHE40/DEC1. This chain is Period circadian protein homolog 1 (Per1), found in Mus musculus (Mouse).